A 160-amino-acid polypeptide reads, in one-letter code: MRCPYCQYEDTQVKDSRPVEEGAVIRRRRVCPVCGGRFTTFERVQLRELLVSKKSGRCEPFDRDKLMRSVEIAVRKRNIDPDYIERAISGIVRGLESLGEPEIASEKIGHLVMEALKSIDDIAYIRFASVYRDFRNASDFHDVIDELSKGIANTESCFDE.

A zinc finger lies at 3–34 (CPYCQYEDTQVKDSRPVEEGAVIRRRRVCPVC). In terms of domain architecture, ATP-cone spans 49–139 (LLVSKKSGRC…VYRDFRNASD (91 aa)).

The protein belongs to the NrdR family. It depends on Zn(2+) as a cofactor.

Negatively regulates transcription of bacterial ribonucleotide reductase nrd genes and operons by binding to NrdR-boxes. The polypeptide is Transcriptional repressor NrdR (Bartonella quintana (strain Toulouse) (Rochalimaea quintana)).